A 375-amino-acid polypeptide reads, in one-letter code: Holliday junction branch migration complex subunit RuvB (375 aa).

The tract at residues 1–50 (MAIVSSKSPDPAERRSQAKTKPSVSEPQDSLVRPQAAPEESQRPEDQIRP) is disordered. The interval 13-209 (ERRSQAKTKP…FGLVQRLRFY (197 aa)) is large ATPase domain (RuvB-L). The span at 19-28 (KTKPSVSEPQ) shows a compositional bias: polar residues. A compositionally biased stretch (basic and acidic residues) spans 40–49 (ESQRPEDQIR). Residues I48, R49, G90, K93, T94, T95, 156–158 (EDF), R199, Y209, and R246 contribute to the ATP site. T94 is a binding site for Mg(2+). Positions 210–280 (EVEALTDIVQ…IAATALELYN (71 aa)) are small ATPAse domain (RuvB-S). Residues 283 to 375 (PCGLDWTDRR…LQQLLTEPET (93 aa)) are head domain (RuvB-H). DNA-binding residues include R338 and R343.

Belongs to the RuvB family. Homohexamer. Forms an RuvA(8)-RuvB(12)-Holliday junction (HJ) complex. HJ DNA is sandwiched between 2 RuvA tetramers; dsDNA enters through RuvA and exits via RuvB. An RuvB hexamer assembles on each DNA strand where it exits the tetramer. Each RuvB hexamer is contacted by two RuvA subunits (via domain III) on 2 adjacent RuvB subunits; this complex drives branch migration. In the full resolvosome a probable DNA-RuvA(4)-RuvB(12)-RuvC(2) complex forms which resolves the HJ.

It localises to the cytoplasm. It carries out the reaction ATP + H2O = ADP + phosphate + H(+). Functionally, the RuvA-RuvB-RuvC complex processes Holliday junction (HJ) DNA during genetic recombination and DNA repair, while the RuvA-RuvB complex plays an important role in the rescue of blocked DNA replication forks via replication fork reversal (RFR). RuvA specifically binds to HJ cruciform DNA, conferring on it an open structure. The RuvB hexamer acts as an ATP-dependent pump, pulling dsDNA into and through the RuvAB complex. RuvB forms 2 homohexamers on either side of HJ DNA bound by 1 or 2 RuvA tetramers; 4 subunits per hexamer contact DNA at a time. Coordinated motions by a converter formed by DNA-disengaged RuvB subunits stimulates ATP hydrolysis and nucleotide exchange. Immobilization of the converter enables RuvB to convert the ATP-contained energy into a lever motion, pulling 2 nucleotides of DNA out of the RuvA tetramer per ATP hydrolyzed, thus driving DNA branch migration. The RuvB motors rotate together with the DNA substrate, which together with the progressing nucleotide cycle form the mechanistic basis for DNA recombination by continuous HJ branch migration. Branch migration allows RuvC to scan DNA until it finds its consensus sequence, where it cleaves and resolves cruciform DNA. The sequence is that of Holliday junction branch migration complex subunit RuvB from Synechococcus elongatus (strain ATCC 33912 / PCC 7942 / FACHB-805) (Anacystis nidulans R2).